A 396-amino-acid chain; its full sequence is Cell division protein DivIB (396 aa).

Disordered regions lie at residues 1 to 23 (MSKDKKNEDKETLEELKELSEWQ) and 37 to 116 (EVAL…ATKE). Residues 1–130 (MSKDKKNEDK…AKIPGIHILR (130 aa)) are Cytoplasmic-facing. 2 stretches are compositionally biased toward basic and acidic residues: residues 37–65 (EVALAEEKEKERQARMGEESEKSEDKQDQ) and 75–116 (ESAK…ATKE). The helical transmembrane segment at 131–151 (AFTILFPSLLLLIVSAYLLSP) threads the bilayer. The Extracellular segment spans residues 152–396 (YATMKDIRVE…NQTNQRSSRR (245 aa)). The POTRA domain occupies 153-223 (ATMKDIRVEG…TKFTIKVKEY (71 aa)). The span at 361–385 (KAKQEAKEAEKKQEEEQKKQEEESN) shows a compositional bias: basic and acidic residues. The tract at residues 361-396 (KAKQEAKEAEKKQEEEQKKQEEESNRNQTNQRSSRR) is disordered. The span at 386-396 (RNQTNQRSSRR) shows a compositional bias: low complexity.

It belongs to the FtsQ/DivIB family. DivIB subfamily.

It localises to the cell membrane. Cell division protein that may be involved in stabilizing or promoting the assembly of the division complex. The chain is Cell division protein DivIB from Streptococcus pneumoniae (strain ATCC BAA-255 / R6).